Reading from the N-terminus, the 316-residue chain is PHD finger protein 20-like protein 1 (316 aa).

A Tudor 1 domain is found at isoleucine 11–proline 71. Glycyl lysine isopeptide (Lys-Gly) (interchain with G-Cter in SUMO2) cross-links involve residues lysine 75 and lysine 79. A Tudor 2 domain is found at phenylalanine 85–lysine 141. Residues alanine 183–serine 237 form a disordered region. The segment covering lysine 186 to serine 197 has biased composition (polar residues). The span at asparagine 198 to threonine 218 shows a compositional bias: basic and acidic residues.

As to quaternary structure, interacts with methylated DNMT1 (DNMT1K142me1). Interacts with SOX2.

Its subcellular location is the nucleus. Is a negative regulator of proteasomal degradation of a set of methylated proteins, including DNMT1 and SOX2. Involved in the maintainance of embryonic stem cells pluripotency, through the regulation of SOX2 levels. The chain is PHD finger protein 20-like protein 1 (PHF20L1) from Bos taurus (Bovine).